The primary structure comprises 412 residues: Kelch repeat-containing protein At1g19470 (412 aa).

Positions 1 to 55 (MVNISEIPDDSNDGCDPNKKPEEQVLRRSRRIATRNENQNKKPKEEEEEDNRSVS) are disordered. Basic and acidic residues predominate over residues 16-26 (DPNKKPEEQVL). 4 Kelch repeats span residues 156–202 (EMYV…VVDG), 203–250 (KIYV…SAHA), 255–291 (KLYMLGSKFCLVYEPKRNGEWDASVGATPLKDLWDKT), and 292–345 (CCVV…EMAN).

This Arabidopsis thaliana (Mouse-ear cress) protein is Kelch repeat-containing protein At1g19470.